Reading from the N-terminus, the 158-residue chain is SsrA-binding protein (158 aa).

The disordered stretch occupies residues 131-158; the sequence is GKKTHDKRETEKKRDWNREKARLLRDRG. Residues 136 to 158 are compositionally biased toward basic and acidic residues; that stretch reads DKRETEKKRDWNREKARLLRDRG.

This sequence belongs to the SmpB family.

The protein localises to the cytoplasm. Required for rescue of stalled ribosomes mediated by trans-translation. Binds to transfer-messenger RNA (tmRNA), required for stable association of tmRNA with ribosomes. tmRNA and SmpB together mimic tRNA shape, replacing the anticodon stem-loop with SmpB. tmRNA is encoded by the ssrA gene; the 2 termini fold to resemble tRNA(Ala) and it encodes a 'tag peptide', a short internal open reading frame. During trans-translation Ala-aminoacylated tmRNA acts like a tRNA, entering the A-site of stalled ribosomes, displacing the stalled mRNA. The ribosome then switches to translate the ORF on the tmRNA; the nascent peptide is terminated with the 'tag peptide' encoded by the tmRNA and targeted for degradation. The ribosome is freed to recommence translation, which seems to be the essential function of trans-translation. The protein is SsrA-binding protein of Brucella abortus biovar 1 (strain 9-941).